A 117-amino-acid chain; its full sequence is Non-specific lipid-transfer protein (117 aa).

Positions 1-26 (MASSAVIKLACAVLLCIVVAAPYAEA) are cleaved as a signal peptide. Disulfide bonds link Cys-30–Cys-76, Cys-40–Cys-53, Cys-54–Cys-99, and Cys-74–Cys-113.

It belongs to the plant LTP family.

Its function is as follows. Plant non-specific lipid-transfer proteins transfer phospholipids as well as galactolipids across membranes. May play a role in wax or cutin deposition in the cell walls of expanding epidermal cells and certain secretory tissues. The sequence is that of Non-specific lipid-transfer protein from Spinacia oleracea (Spinach).